The following is a 680-amino-acid chain: Coiled-coil domain-containing protein 138 (680 aa).

Thr63 bears the Phosphothreonine mark. Ser64 bears the Phosphoserine mark. Positions 260–339 (KEQHGTEIEH…YEFMTVQRLK (80 aa)) form a coiled coil. Residues 390 to 410 (EPEEPGVDGGKPPAKPSQRSD) are disordered. Phosphoserine is present on Ser484.

The protein is Coiled-coil domain-containing protein 138 (Ccdc138) of Mus musculus (Mouse).